The following is a 280-amino-acid chain: Pupal cuticle protein 36a (280 aa).

The signal sequence occupies residues 1–15 (MKLFVLAAVLGVCLA). The region spanning 135–198 (AEGFAYDFET…SQGAHLPTPP (64 aa)) is the Chitin-binding type R&amp;R domain. The interval 258-280 (GAGRAGGTATSASEAPTTTIRLM) is disordered.

This is Pupal cuticle protein 36a (PCP36a) from Manduca sexta (Tobacco hawkmoth).